The chain runs to 204 residues: dITP/XTP pyrophosphatase (204 aa).

8 to 13 is a substrate binding site; sequence SNNAKK. Mg(2+) contacts are provided by glutamate 43 and aspartate 72. The Proton acceptor role is filled by aspartate 72. Substrate-binding positions include serine 73, 155-158, lysine 180, and 185-186; these read FGYD and HR.

The protein belongs to the HAM1 NTPase family. As to quaternary structure, homodimer. Mg(2+) is required as a cofactor.

It carries out the reaction XTP + H2O = XMP + diphosphate + H(+). The enzyme catalyses dITP + H2O = dIMP + diphosphate + H(+). The catalysed reaction is ITP + H2O = IMP + diphosphate + H(+). Functionally, pyrophosphatase that catalyzes the hydrolysis of nucleoside triphosphates to their monophosphate derivatives, with a high preference for the non-canonical purine nucleotides XTP (xanthosine triphosphate), dITP (deoxyinosine triphosphate) and ITP. Seems to function as a house-cleaning enzyme that removes non-canonical purine nucleotides from the nucleotide pool, thus preventing their incorporation into DNA/RNA and avoiding chromosomal lesions. This chain is dITP/XTP pyrophosphatase, found in Cutibacterium acnes (strain DSM 16379 / KPA171202) (Propionibacterium acnes).